The following is a 335-amino-acid chain: ATP-dependent 6-phosphofructokinase (335 aa).

Glycine 11 contributes to the ATP binding site. Arginine 21–arginine 25 lines the ADP pocket. Residues arginine 72–tyrosine 73 and glycine 102–serine 105 each bind ATP. Aspartate 103 contributes to the Mg(2+) binding site. Threonine 125–aspartate 127 is a substrate binding site. The Proton acceptor role is filled by aspartate 127. Residue arginine 154 participates in ADP binding. Residues arginine 162 and methionine 169–arginine 171 each bind substrate. ADP is bound by residues glycine 185 to aspartate 187 and lysine 213 to histidine 215. Substrate-binding positions include glutamate 222, arginine 244, and histidine 250 to arginine 253.

Belongs to the phosphofructokinase type A (PFKA) family. ATP-dependent PFK group I subfamily. Prokaryotic clade 'B1' sub-subfamily. Homotetramer. It depends on Mg(2+) as a cofactor.

Its subcellular location is the cytoplasm. It carries out the reaction beta-D-fructose 6-phosphate + ATP = beta-D-fructose 1,6-bisphosphate + ADP + H(+). Its pathway is carbohydrate degradation; glycolysis; D-glyceraldehyde 3-phosphate and glycerone phosphate from D-glucose: step 3/4. With respect to regulation, allosterically activated by ADP and other diphosphonucleosides, and allosterically inhibited by phosphoenolpyruvate. Catalyzes the phosphorylation of D-fructose 6-phosphate to fructose 1,6-bisphosphate by ATP, the first committing step of glycolysis. This Streptococcus pneumoniae (strain CGSP14) protein is ATP-dependent 6-phosphofructokinase.